The sequence spans 202 residues: Nucleoside triphosphate pyrophosphatase (202 aa).

The active-site Proton acceptor is Asp-79.

Belongs to the Maf family. It depends on a divalent metal cation as a cofactor.

It is found in the cytoplasm. The enzyme catalyses a ribonucleoside 5'-triphosphate + H2O = a ribonucleoside 5'-phosphate + diphosphate + H(+). The catalysed reaction is a 2'-deoxyribonucleoside 5'-triphosphate + H2O = a 2'-deoxyribonucleoside 5'-phosphate + diphosphate + H(+). Its function is as follows. Nucleoside triphosphate pyrophosphatase. May have a dual role in cell division arrest and in preventing the incorporation of modified nucleotides into cellular nucleic acids. The protein is Nucleoside triphosphate pyrophosphatase of Bradyrhizobium diazoefficiens (strain JCM 10833 / BCRC 13528 / IAM 13628 / NBRC 14792 / USDA 110).